A 345-amino-acid polypeptide reads, in one-letter code: Methylthioribose-1-phosphate isomerase 2 (345 aa).

Residues 47-49 (RGA), arginine 88, and glutamine 194 each bind substrate. The active-site Proton donor is the aspartate 235. Substrate is bound at residue 245–246 (NK).

It belongs to the eIF-2B alpha/beta/delta subunits family. MtnA subfamily.

It carries out the reaction 5-(methylsulfanyl)-alpha-D-ribose 1-phosphate = 5-(methylsulfanyl)-D-ribulose 1-phosphate. The protein operates within amino-acid biosynthesis; L-methionine biosynthesis via salvage pathway; L-methionine from S-methyl-5-thio-alpha-D-ribose 1-phosphate: step 1/6. Catalyzes the interconversion of methylthioribose-1-phosphate (MTR-1-P) into methylthioribulose-1-phosphate (MTRu-1-P). This is Methylthioribose-1-phosphate isomerase 2 from Pseudothermotoga lettingae (strain ATCC BAA-301 / DSM 14385 / NBRC 107922 / TMO) (Thermotoga lettingae).